Reading from the N-terminus, the 389-residue chain is Dual-specificity RNA methyltransferase RlmN (389 aa).

Residue glutamate 110 is the Proton acceptor of the active site. Residues 116–355 enclose the Radical SAM core domain; the sequence is EKDRATLCVS…TIVRKTRGDD (240 aa). Cysteine 123 and cysteine 360 form a disulfide bridge. Cysteine 130, cysteine 134, and cysteine 137 together coordinate [4Fe-4S] cluster. Residues 184 to 185, serine 216, 238 to 240, and asparagine 317 each bind S-adenosyl-L-methionine; these read GE and SLH. Cysteine 360 acts as the S-methylcysteine intermediate in catalysis.

It belongs to the radical SAM superfamily. RlmN family. It depends on [4Fe-4S] cluster as a cofactor.

The protein resides in the cytoplasm. The enzyme catalyses adenosine(2503) in 23S rRNA + 2 reduced [2Fe-2S]-[ferredoxin] + 2 S-adenosyl-L-methionine = 2-methyladenosine(2503) in 23S rRNA + 5'-deoxyadenosine + L-methionine + 2 oxidized [2Fe-2S]-[ferredoxin] + S-adenosyl-L-homocysteine. The catalysed reaction is adenosine(37) in tRNA + 2 reduced [2Fe-2S]-[ferredoxin] + 2 S-adenosyl-L-methionine = 2-methyladenosine(37) in tRNA + 5'-deoxyadenosine + L-methionine + 2 oxidized [2Fe-2S]-[ferredoxin] + S-adenosyl-L-homocysteine. Its function is as follows. Specifically methylates position 2 of adenine 2503 in 23S rRNA and position 2 of adenine 37 in tRNAs. m2A2503 modification seems to play a crucial role in the proofreading step occurring at the peptidyl transferase center and thus would serve to optimize ribosomal fidelity. In Erwinia tasmaniensis (strain DSM 17950 / CFBP 7177 / CIP 109463 / NCPPB 4357 / Et1/99), this protein is Dual-specificity RNA methyltransferase RlmN.